The primary structure comprises 184 residues: ATP synthase subunit b, chloroplastic (184 aa).

The helical transmembrane segment at 26–48 threads the bilayer; it reads ILATNLINLSVVLGVLIFFGKGV.

The protein belongs to the ATPase B chain family. As to quaternary structure, F-type ATPases have 2 components, F(1) - the catalytic core - and F(0) - the membrane proton channel. F(1) has five subunits: alpha(3), beta(3), gamma(1), delta(1), epsilon(1). F(0) has four main subunits: a(1), b(1), b'(1) and c(10-14). The alpha and beta chains form an alternating ring which encloses part of the gamma chain. F(1) is attached to F(0) by a central stalk formed by the gamma and epsilon chains, while a peripheral stalk is formed by the delta, b and b' chains.

It localises to the plastid. The protein localises to the chloroplast thylakoid membrane. Functionally, f(1)F(0) ATP synthase produces ATP from ADP in the presence of a proton or sodium gradient. F-type ATPases consist of two structural domains, F(1) containing the extramembraneous catalytic core and F(0) containing the membrane proton channel, linked together by a central stalk and a peripheral stalk. During catalysis, ATP synthesis in the catalytic domain of F(1) is coupled via a rotary mechanism of the central stalk subunits to proton translocation. Its function is as follows. Component of the F(0) channel, it forms part of the peripheral stalk, linking F(1) to F(0). This is ATP synthase subunit b, chloroplastic from Acorus calamus (Sweet flag).